We begin with the raw amino-acid sequence, 274 residues long: Photosystem II extrinsic protein O (274 aa).

The first 28 residues, 1-28 (MRFRPSIVALLSVCFGLLTFLYSGSAFA), serve as a signal peptide directing secretion.

This sequence belongs to the PsbO family. In terms of assembly, PSII is composed of 1 copy each of membrane proteins PsbA, PsbB, PsbC, PsbD, PsbE, PsbF, PsbH, PsbI, PsbJ, PsbK, PsbL, PsbM, PsbT, PsbX, PsbY, PsbZ, Psb30/Ycf12, peripheral proteins PsbO, CyanoQ (PsbQ), PsbU, PsbV and a large number of cofactors. It forms dimeric complexes. Contacts PsbQ.

It localises to the cellular thylakoid membrane. In terms of biological role, one of the extrinsic, lumenal subunits of photosystem II (PSII), which stabilize and protect the oxygen-evolving complex. PSII is a light-driven water plastoquinone oxidoreductase, using light energy to abstract electrons from H(2)O, generating a proton gradient subsequently used for ATP formation. Required for dimerization of PSII and for binding of PsbQ to PSII. The sequence is that of Photosystem II extrinsic protein O from Synechocystis sp. (strain ATCC 27184 / PCC 6803 / Kazusa).